The chain runs to 340 residues: Alpha-1,3-galactosyltransferase 2 (340 aa).

The Cytoplasmic portion of the chain corresponds to methionine 1–arginine 12. Residues isoleucine 13–leucine 32 form a helical; Signal-anchor for type II membrane protein membrane-spanning segment. Topologically, residues proline 33–asparagine 340 are lumenal. 2 N-linked (GlcNAc...) asparagine glycosylation sites follow: asparagine 58 and asparagine 100. Positions 199 and 201 each coordinate Mn(2+).

It belongs to the glycosyltransferase 6 family. Requires Mn(2+) as cofactor. Expressed in thymus and monocyte derived dendritic cells.

It is found in the golgi apparatus. The protein resides in the golgi stack membrane. It carries out the reaction a beta-D-galactosyl-(1-&gt;4)-N-acetyl-beta-D-glucosaminyl derivative + UDP-alpha-D-galactose = an alpha-D-galactosyl-(1-&gt;3)-beta-D-galactosyl-(1-&gt;4)-N-acetyl-beta-D-glucosaminyl derivative + UDP + H(+). The enzyme catalyses a beta-D-Gal-(1-&gt;4)-beta-D-Glc-(1&lt;-&gt;1)-Cer(d18:1(4E)) + UDP-alpha-D-galactose = an isogloboside iGb3Cer (d18:1(4E)) + UDP + H(+). The catalysed reaction is a globoside Gb3Cer + UDP-alpha-D-galactose = a globoside GalGb3Cer + UDP + H(+). Functionally, synthesizes the galactose-alpha(1,3)-galactose group on the glycosphingolipid isoglobotrihexosylceramide or isogloboside 3 (iGb3) by catalyzing the transfer of galactose from UDP-Galactose to its acceptor molecule Gal-beta-1,4-Glc-ceramide. Can also catalyze the addition of galactose to iGb3 itself to form polygalactose structures. The chain is Alpha-1,3-galactosyltransferase 2 from Homo sapiens (Human).